A 201-amino-acid polypeptide reads, in one-letter code: Small ribosomal subunit protein uS4 (201 aa).

Positions 27 to 47 (SKKNYPPGQHGNSRKRKTSEY) are disordered. The 61-residue stretch at 92–152 (GRLDNVVYRL…EKSKSMEVIA (61 aa)) folds into the S4 RNA-binding domain.

The protein belongs to the universal ribosomal protein uS4 family. In terms of assembly, part of the 30S ribosomal subunit. Contacts protein S5. The interaction surface between S4 and S5 is involved in control of translational fidelity.

In terms of biological role, one of the primary rRNA binding proteins, it binds directly to 16S rRNA where it nucleates assembly of the body of the 30S subunit. Its function is as follows. With S5 and S12 plays an important role in translational accuracy. In Parabacteroides distasonis (strain ATCC 8503 / DSM 20701 / CIP 104284 / JCM 5825 / NCTC 11152), this protein is Small ribosomal subunit protein uS4.